Here is a 327-residue protein sequence, read N- to C-terminus: Aldo-keto reductase family 1 member A1 (327 aa).

NADP(+) is bound by residues 13–22 (GQKIPLIGLG), Thr-23, Trp-24, and Asp-47. The Proton donor role is filled by Tyr-52. Residues Ser-164, Asn-165, Ser-213, Leu-215, Ser-217, Lys-265, Ser-266, Val-267, Thr-268, Arg-271, Gln-274, and Asn-275 each coordinate NADP(+).

The protein belongs to the aldo/keto reductase family.

It is found in the cytoplasm. The protein resides in the cytosol. The protein localises to the apical cell membrane. It catalyses the reaction a primary alcohol + NADP(+) = an aldehyde + NADPH + H(+). It carries out the reaction S-nitroso-CoA + NADPH + H(+) = sulfinamide-CoA + NADP(+). The catalysed reaction is S-nitrosoglutathione + NADPH + H(+) = S-(hydroxysulfenamide)glutathione + NADP(+). Catalyzes the NADPH-dependent reduction of a wide variety of carbonyl-containing compounds to their corresponding alcohols. Displays enzymatic activity towards endogenous metabolites such as aromatic and aliphatic aldehydes, ketones, monosaccharides and bile acids. Acts as an aldehyde-detoxification enzyme. Also acts as an inhibitor of protein S-nitrosylation by mediating degradation of S-nitroso-coenzyme A (S-nitroso-CoA), a cofactor required to S-nitrosylate proteins. Also acts as a S-nitroso-glutathione reductase by catalyzing the NADPH-dependent reduction of S-nitrosoglutathione. Displays no reductase activity towards retinoids. The protein is Aldo-keto reductase family 1 member A1 (AKR1A1) of Gallus gallus (Chicken).